The chain runs to 70 residues: ATP synthase subunit c (70 aa).

2 consecutive transmembrane segments (helical) span residues 5 to 25 (AAAIAIGLAALGAGIGNGLIV) and 47 to 67 (FIGVALVEAIPIIAVVIAFMV).

The protein belongs to the ATPase C chain family. As to quaternary structure, F-type ATPases have 2 components, F(1) - the catalytic core - and F(0) - the membrane proton channel. F(1) has five subunits: alpha(3), beta(3), gamma(1), delta(1), epsilon(1). F(0) has three main subunits: a(1), b(2) and c(10-14). The alpha and beta chains form an alternating ring which encloses part of the gamma chain. F(1) is attached to F(0) by a central stalk formed by the gamma and epsilon chains, while a peripheral stalk is formed by the delta and b chains.

The protein localises to the cell membrane. Its function is as follows. F(1)F(0) ATP synthase produces ATP from ADP in the presence of a proton or sodium gradient. F-type ATPases consist of two structural domains, F(1) containing the extramembraneous catalytic core and F(0) containing the membrane proton channel, linked together by a central stalk and a peripheral stalk. During catalysis, ATP synthesis in the catalytic domain of F(1) is coupled via a rotary mechanism of the central stalk subunits to proton translocation. In terms of biological role, key component of the F(0) channel; it plays a direct role in translocation across the membrane. A homomeric c-ring of between 10-14 subunits forms the central stalk rotor element with the F(1) delta and epsilon subunits. The chain is ATP synthase subunit c from Anoxybacillus flavithermus (strain DSM 21510 / WK1).